A 193-amino-acid chain; its full sequence is Xanthine phosphoribosyltransferase (193 aa).

2 residues coordinate xanthine: L20 and T27. Residue 128–132 coordinates 5-phospho-alpha-D-ribose 1-diphosphate; that stretch reads ANGQA. K156 contacts xanthine.

Belongs to the purine/pyrimidine phosphoribosyltransferase family. Xpt subfamily. Homodimer.

It is found in the cytoplasm. It carries out the reaction XMP + diphosphate = xanthine + 5-phospho-alpha-D-ribose 1-diphosphate. Its pathway is purine metabolism; XMP biosynthesis via salvage pathway; XMP from xanthine: step 1/1. Converts the preformed base xanthine, a product of nucleic acid breakdown, to xanthosine 5'-monophosphate (XMP), so it can be reused for RNA or DNA synthesis. The protein is Xanthine phosphoribosyltransferase of Streptococcus pyogenes serotype M3 (strain ATCC BAA-595 / MGAS315).